Here is a 344-residue protein sequence, read N- to C-terminus: Transcription factor JunB (344 aa).

Residues lysine 4, lysine 33, and lysine 36 each participate in a glycyl lysine isopeptide (Lys-Gly) (interchain with G-Cter in SUMO2) cross-link. Gly residues predominate over residues 51–65 (KGPGARGPGPEGSGA). Positions 51-75 (KGPGARGPGPEGSGAGSYFSGQGSD) are disordered. Lysine 81 participates in a covalent cross-link: Glycyl lysine isopeptide (Lys-Gly) (interchain with G-Cter in SUMO2). Residues threonine 102 and threonine 104 each carry the phosphothreonine modification. Position 117 is a phosphoserine (serine 117). Lysine 138 participates in a covalent cross-link: Glycyl lysine isopeptide (Lys-Gly) (interchain with G-Cter in SUMO2). Disordered stretches follow at residues 181–202 (NLSS…VGTG) and 237–257 (KEEP…PVSP). A compositionally biased stretch (low complexity) spans 183–192 (SSYSPASAPS). Lysine 237 carries the post-translational modification N6-acetyllysine; alternate. Lysine 237 is covalently cross-linked (Glycyl lysine isopeptide (Lys-Gly) (interchain with G-Cter in SUMO1); alternate). A Glycyl lysine isopeptide (Lys-Gly) (interchain with G-Cter in SUMO2); alternate cross-link involves residue lysine 237. Basic and acidic residues predominate over residues 237–250 (KEEPQTVPEARSRD). Serine 248 carries the phosphoserine modification. Residue threonine 252 is modified to Phosphothreonine. A Phosphoserine modification is found at serine 256. The interval 265–292 (RIKVERKRLRNRLAATKCRKRKLERIAR) is basic motif. A bZIP domain is found at 265-328 (RIKVERKRLR…AQLKQKVMTH (64 aa)). A leucine-zipper region spans residues 293 to 321 (LEDKVKTLKAENAGLSSAAGLLREQVAQL). A Glycyl lysine isopeptide (Lys-Gly) (interchain with G-Cter in SUMO2) cross-link involves residue lysine 340.

It belongs to the bZIP family. Jun subfamily. Binds DNA as a homodimer or as a heterodimer with another member of the Jun/Fos family. Component of an AP-1 transcription factor complex composed of JUN-FOS heterodimers. As part of the AP-1 transcription factor complex, forms heterodimers with FOSB, thereby binding to the AP-1 consensus sequence and stimulating transcription. Interacts with NFE2 (via its WW domains). In terms of processing, ubiquitinated by ITCH, leading to its degradation.

Its subcellular location is the nucleus. Its function is as follows. Transcription factor involved in regulating gene activity following the primary growth factor response. Binds to the DNA sequence 5'-TGA[GC]TCA-3'. Heterodimerizes with proteins of the FOS family to form an AP-1 transcription complex, thereby enhancing its DNA binding activity to an AP-1 consensus sequence 5'-TGA[GC]TCA-3' and enhancing its transcriptional activity. In Mus musculus (Mouse), this protein is Transcription factor JunB (Junb).